Here is a 299-residue protein sequence, read N- to C-terminus: Leucine zipper transcription factor-like protein 1 (299 aa).

Positions 96–296 (LKLQTDISEL…DLRKRLAKYE (201 aa)) form a coiled coil. An interaction with BSS9 region spans residues 145–299 (GAAELLNKEI…KRLAKYEPED (155 aa)).

This sequence belongs to the LZTFL1 family. Self-associates. Interacts with BBS9; the interaction mediates the association of LZTL1 with the BBsome complex and regulates BBSome ciliary trafficking.

It localises to the cytoplasm. Its function is as follows. Regulates ciliary localization of the BBSome complex. Together with the BBSome complex, controls SMO ciliary trafficking and contributes to the sonic hedgehog (SHH) pathway regulation. May play a role in neurite outgrowth. May have tumor suppressor function. The chain is Leucine zipper transcription factor-like protein 1 (LZTFL1) from Bos taurus (Bovine).